We begin with the raw amino-acid sequence, 111 residues long: Probable 4-amino-4-deoxy-L-arabinose-phosphoundecaprenol flippase subunit ArnE (111 aa).

The next 3 helical transmembrane spans lie at W39 to Q59, V61 to A81, and V89 to V109. Positions L40–V109 constitute an EamA domain.

Belongs to the ArnE family. As to quaternary structure, heterodimer of ArnE and ArnF.

The protein localises to the cell inner membrane. The protein operates within bacterial outer membrane biogenesis; lipopolysaccharide biosynthesis. Translocates 4-amino-4-deoxy-L-arabinose-phosphoundecaprenol (alpha-L-Ara4N-phosphoundecaprenol) from the cytoplasmic to the periplasmic side of the inner membrane. The chain is Probable 4-amino-4-deoxy-L-arabinose-phosphoundecaprenol flippase subunit ArnE from Sodalis glossinidius (strain morsitans).